The chain runs to 408 residues: S-adenosylmethionine synthase (408 aa).

H19 is a binding site for ATP. D21 is a binding site for Mg(2+). K(+) is bound at residue E47. Positions 60 and 104 each coordinate L-methionine. The interval 104-114 (QSPEIASGVDH) is flexible loop. Residues 185 to 187 (DAK), 255 to 256 (RF), D264, 270 to 271 (RK), A287, and K291 each bind ATP. L-methionine is bound at residue D264. K295 lines the L-methionine pocket.

The protein belongs to the AdoMet synthase family. As to quaternary structure, homotetramer; dimer of dimers. The cofactor is Mg(2+). Requires K(+) as cofactor.

It localises to the cytoplasm. The catalysed reaction is L-methionine + ATP + H2O = S-adenosyl-L-methionine + phosphate + diphosphate. Its pathway is amino-acid biosynthesis; S-adenosyl-L-methionine biosynthesis; S-adenosyl-L-methionine from L-methionine: step 1/1. Functionally, catalyzes the formation of S-adenosylmethionine (AdoMet) from methionine and ATP. The overall synthetic reaction is composed of two sequential steps, AdoMet formation and the subsequent tripolyphosphate hydrolysis which occurs prior to release of AdoMet from the enzyme. This Deinococcus radiodurans (strain ATCC 13939 / DSM 20539 / JCM 16871 / CCUG 27074 / LMG 4051 / NBRC 15346 / NCIMB 9279 / VKM B-1422 / R1) protein is S-adenosylmethionine synthase.